Reading from the N-terminus, the 56-residue chain is MAKADYNKRKPRKFGKGARRCIRCGQYGPIIRIQGLMLCRHCFREVAPKLGFRKYE.

Zn(2+) contacts are provided by C21, C24, C39, and C42.

It belongs to the universal ribosomal protein uS14 family. Zinc-binding uS14 subfamily. In terms of assembly, part of the 30S ribosomal subunit. The cofactor is Zn(2+).

In terms of biological role, binds 16S rRNA, required for the assembly of 30S particles. In Pyrococcus furiosus (strain ATCC 43587 / DSM 3638 / JCM 8422 / Vc1), this protein is Small ribosomal subunit protein uS14.